Reading from the N-terminus, the 604-residue chain is Glutamine--fructose-6-phosphate aminotransferase [isomerizing] (604 aa).

The active-site Nucleophile; for GATase activity is Cys-2. Positions 2-219 constitute a Glutamine amidotransferase type-2 domain; that stretch reads CGIMGAVSER…EGDSACVTTQ (218 aa). 2 consecutive SIS domains span residues 279–427 and 454–594; these read LRAS…DNRA and LASL…VDQP. Catalysis depends on Lys-599, which acts as the For Fru-6P isomerization activity.

Homodimer.

The protein localises to the cytoplasm. It carries out the reaction D-fructose 6-phosphate + L-glutamine = D-glucosamine 6-phosphate + L-glutamate. Functionally, catalyzes the first step in hexosamine metabolism, converting fructose-6P into glucosamine-6P using glutamine as a nitrogen source. The protein is Glutamine--fructose-6-phosphate aminotransferase [isomerizing] of Legionella pneumophila subsp. pneumophila (strain Philadelphia 1 / ATCC 33152 / DSM 7513).